Reading from the N-terminus, the 68-residue chain is DNA-directed RNA polymerase subunit omega (68 aa).

Belongs to the RNA polymerase subunit omega family. The RNAP catalytic core consists of 2 alpha, 1 beta, 1 beta' and 1 omega subunit. When a sigma factor is associated with the core the holoenzyme is formed, which can initiate transcription.

The catalysed reaction is RNA(n) + a ribonucleoside 5'-triphosphate = RNA(n+1) + diphosphate. Functionally, promotes RNA polymerase assembly. Latches the N- and C-terminal regions of the beta' subunit thereby facilitating its interaction with the beta and alpha subunits. This is DNA-directed RNA polymerase subunit omega from Geobacter sp. (strain M21).